We begin with the raw amino-acid sequence, 507 residues long: Serine/threonine-protein kinase BSK11 (507 aa).

A lipid anchor (N-myristoyl glycine) is attached at Gly-2. A compositionally biased stretch (basic and acidic residues) spans 16 to 26 (DKKITSDDLSG). A disordered region spans residues 16–44 (DKKITSDDLSGRRGKGAKRGNRHRHANIN). Basic residues predominate over residues 27 to 41 (RRGKGAKRGNRHRHA). Positions 75–332 (NAVVSVCSDQ…GDIISVITTL (258 aa)) constitute a Protein kinase domain. ATP is bound by residues 81–89 (CSDQEPNLV) and Lys-106. Residue Asp-200 is the Proton acceptor of the active site.

This sequence belongs to the protein kinase superfamily. Ser/Thr protein kinase family. Interacts with BRI1, ASK7/BIN2, BSK1, BSK6 and BSK8. Phosphorylated by BRI1, ASK7/BIN2 and ASK9/BIL2.

Its subcellular location is the cell membrane. It catalyses the reaction L-seryl-[protein] + ATP = O-phospho-L-seryl-[protein] + ADP + H(+). The enzyme catalyses L-threonyl-[protein] + ATP = O-phospho-L-threonyl-[protein] + ADP + H(+). Probable serine/threonine kinase that acts as a positive regulator of brassinosteroid (BR) signaling downstream of the receptor kinase BRI1. The sequence is that of Serine/threonine-protein kinase BSK11 from Arabidopsis thaliana (Mouse-ear cress).